We begin with the raw amino-acid sequence, 261 residues long: Probable trans-aconitate 2-methyltransferase (261 aa).

Belongs to the methyltransferase superfamily. Tam family.

The protein localises to the cytoplasm. It catalyses the reaction trans-aconitate + S-adenosyl-L-methionine = (E)-3-(methoxycarbonyl)pent-2-enedioate + S-adenosyl-L-homocysteine. In terms of biological role, catalyzes the S-adenosylmethionine monomethyl esterification of trans-aconitate. This Mycobacterium bovis (strain ATCC BAA-935 / AF2122/97) protein is Probable trans-aconitate 2-methyltransferase.